The following is a 774-amino-acid chain: Effector protein hopW1-1 (774 aa).

Disordered regions lie at residues 1-33 (MSPA…QSPQ) and 301-340 (CQAG…VPGQ). The segment covering 9-23 (TPHSFPPSFTGTSSS) has biased composition (low complexity). Over residues 24–33 (AENSHAQSPQ) the composition is skewed to polar residues.

This sequence belongs to the HopW family. In terms of assembly, interacts (via C-terminus) with Arabidopsis WIN1, WIN2 and WIN3.

Its subcellular location is the secreted. In terms of biological role, induces hypersensitive response (HR). The protein is Effector protein hopW1-1 (hopW1-1) of Pseudomonas syringae pv. maculicola.